The chain runs to 377 residues: Probable G-protein coupled receptor F27E5.8 (377 aa).

The Extracellular segment spans residues 1 to 34 (MSEQDSSSPKYMRFLLGNFTSAEMVTDGNFLIYC). Asparagine 18 carries N-linked (GlcNAc...) asparagine glycosylation. A helical membrane pass occupies residues 35-55 (IEMGLLVIGVLENIFMIGAVF). Over 56–71 (STSCLHLNLRILICNC) the chain is Cytoplasmic. The chain crosses the membrane as a helical span at residues 72–92 (CLGFILMAVGRAMIAVPLCIA). The Extracellular portion of the chain corresponds to 93–105 (HLRDVDISSHAWC). The chain crosses the membrane as a helical span at residues 106 to 126 (FIANAVHHSSADSVCLSFVFI). Residues 127–144 (MLERTAGTIWSKDYEKTK) are Cytoplasmic-facing. Residues 145 to 165 (IHIFPCIFAFLQWFIPMFMIL) traverse the membrane as a helical segment. Over 166–195 (GNFLDRANRMEHFLLYPHLPCQIEYLTPTM) the chain is Extracellular. A helical membrane pass occupies residues 196–216 (FMITIFIIVIGFIASVGGITI). At 217-251 (VYNKNIKKYNTRDIWFNTVNLSERYQITENIRSTH) the chain is on the cytoplasmic side. The helical transmembrane segment at 252 to 272 (LLFPLLALMLIFSTLSVSVLI) threads the bilayer. At 273 to 303 (YGGYWVSVMTKEPARFEEVVKWFGRGGEAAQ) the chain is on the extracellular side. Residues 304–324 (LFDIITAIYTISFPICAFICH) form a helical membrane-spanning segment. Topologically, residues 325-377 (PNLFRFLRKFIGWNSYAVRPSNLNEIGGFEMSTAPIRTQTEFHFQELSRQWNT) are cytoplasmic.

It belongs to the G-protein coupled receptor 1 family.

The protein localises to the cell membrane. The protein is Probable G-protein coupled receptor F27E5.8 of Caenorhabditis elegans.